We begin with the raw amino-acid sequence, 203 residues long: Glycerol-3-phosphate acyltransferase (203 aa).

4 consecutive transmembrane segments (helical) span residues 7–27, 82–102, 118–138, and 141–161; these read TLLM…VLVC, AVSL…PVFF, APIG…LLLI, and YSSL…WWLD.

It belongs to the PlsY family. In terms of assembly, probably interacts with PlsX.

It localises to the cell inner membrane. It carries out the reaction an acyl phosphate + sn-glycerol 3-phosphate = a 1-acyl-sn-glycero-3-phosphate + phosphate. It participates in lipid metabolism; phospholipid metabolism. In terms of biological role, catalyzes the transfer of an acyl group from acyl-phosphate (acyl-PO(4)) to glycerol-3-phosphate (G3P) to form lysophosphatidic acid (LPA). This enzyme utilizes acyl-phosphate as fatty acyl donor, but not acyl-CoA or acyl-ACP. The polypeptide is Glycerol-3-phosphate acyltransferase (Shewanella baltica (strain OS223)).